A 614-amino-acid chain; its full sequence is Polyamine transporter 2 (614 aa).

The tract at residues 1 to 40 (MSDQESVVSFNSQNTSMVDVEGQQPQQYVPSKTNSRANQL) is disordered. Residues 1 to 173 (MSDQESVVSF…WPSWVRWSYT (173 aa)) are Cytoplasmic-facing. The residue at position 50 (Ser-50) is a Phosphoserine. Polar residues predominate over residues 99 to 122 (RTASALSRTRTKQLNRTATNSSST). The disordered stretch occupies residues 99-144 (RTASALSRTRTKQLNRTATNSSSTGKEEMEEEETEEREDQSGENEL). Acidic residues predominate over residues 126–144 (EMEEEETEEREDQSGENEL). A helical membrane pass occupies residues 174–194 (VLLSILVICVAYGSACISGGL). Residues 195–206 (GTVEKKYHVGME) are Extracellular-facing. The chain crosses the membrane as a helical span at residues 207-227 (AAILSCSLMVIGFSLGPLIWS). The Cytoplasmic portion of the chain corresponds to 228–236 (PVSDLYGRR). Residues 237-257 (VAYFVSMGLYVIFNIPCALAP) form a helical membrane-spanning segment. The Extracellular segment spans residues 258 to 266 (NLGCLLACR). Residues 267 to 287 (FLCGVWSSSGLCLVGGSIADM) traverse the membrane as a helical segment. Topologically, residues 288 to 297 (FPSETRGKAI) are cytoplasmic. The chain crosses the membrane as a helical span at residues 298–318 (AFFAFAPYVGPVVGPLVNGFI). Residues 319–326 (SVSTGRMD) are Extracellular-facing. The helical transmembrane segment at 327–347 (LIFWVNMAFAGVMWIISSAIP) threads the bilayer. The Cytoplasmic portion of the chain corresponds to 348–407 (ETYAPVILKRKAARLRKETGNPKIMTEQEAQGVSMSEMMRACLLRPLYFAVTEPVLVATC). The helical transmembrane segment at 408-428 (FYVCLIYSLLYAFFFAFPVIF) threads the bilayer. The Extracellular segment spans residues 429–437 (GELYGYKDN). The chain crosses the membrane as a helical span at residues 438–458 (LVGLMFIPIVIGALWALATTF). At 459 to 478 (YCENKYLQIVKQRKPTPEDR) the chain is on the cytoplasmic side. Residues 479 to 499 (LLGAKIGAPFAAIALWILGAT) traverse the membrane as a helical segment. The Extracellular portion of the chain corresponds to 500 to 503 (AYKH). A helical membrane pass occupies residues 504–524 (IIWVGPASAGLAFGFGMVLIY). Residues 525-541 (YSLNNYIIDCYVQYASS) lie on the Cytoplasmic side of the membrane. Residues 542–562 (ALATKVFLRSAGGAAFPLFTI) traverse the membrane as a helical segment. The Extracellular segment spans residues 563 to 574 (QMYHKLNLHWGS). The helical transmembrane segment at 575 to 595 (WLLAFISTAMIALPFAFSYWG) threads the bilayer. Residues 596–614 (KGLRHKLSKKDYSIDSVEM) are Cytoplasmic-facing.

Belongs to the major facilitator superfamily. DHA1 family. Polyamines/proton antiporter (TC 2.A.1.2.16) subfamily.

The protein localises to the cell membrane. Cell membrane polyamine/proton antiporter, involved in the detoxification of excess polyamines in the cytoplasm. Recognizes spermine, but not spermidine. The protein is Polyamine transporter 2 (TPO2) of Saccharomyces cerevisiae (strain ATCC 204508 / S288c) (Baker's yeast).